A 205-amino-acid chain; its full sequence is N-(5'-phosphoribosyl)anthranilate isomerase (205 aa).

The protein belongs to the TrpF family.

The enzyme catalyses N-(5-phospho-beta-D-ribosyl)anthranilate = 1-(2-carboxyphenylamino)-1-deoxy-D-ribulose 5-phosphate. Its pathway is amino-acid biosynthesis; L-tryptophan biosynthesis; L-tryptophan from chorismate: step 3/5. The protein is N-(5'-phosphoribosyl)anthranilate isomerase of Thermotoga neapolitana (strain ATCC 49049 / DSM 4359 / NBRC 107923 / NS-E).